A 217-amino-acid chain; its full sequence is Small ribosomal subunit protein uS3 (217 aa).

In terms of domain architecture, KH type-2 spans 24–93; sequence IKEFLEYKLS…NPQIDVIDVS (70 aa).

The protein belongs to the universal ribosomal protein uS3 family. As to quaternary structure, part of the 30S ribosomal subunit.

Its function is as follows. Binds the lower part of the 30S subunit head. This chain is Small ribosomal subunit protein uS3, found in Pyrobaculum islandicum (strain DSM 4184 / JCM 9189 / GEO3).